Here is a 96-residue protein sequence, read N- to C-terminus: Plasminogen-like protein B (96 aa).

The signal sequence occupies residues 1–19 (MEHKEVVLLLLLFLKSGQG). One can recognise a PAN domain in the interval 20–96 (EPLDDYVNTQ…RMRDAVLFEK (77 aa)). Cystine bridges form between Cys-49–Cys-73 and Cys-53–Cys-61.

It localises to the secreted. In terms of biological role, may bind noncovalently to lysine binding sites present in the kringle structures of plasminogen. This may interfere with the binding of fibrin or alpha-2-antiplasmin to plasminogen and may result in the localization of activity at sites necessary for extracellular matrix destruction. The sequence is that of Plasminogen-like protein B (PLGLB1) from Homo sapiens (Human).